Here is a 172-residue protein sequence, read N- to C-terminus: Histone H1-like protein HC2 (172 aa).

The disordered stretch occupies residues 1–77 (MIGAQKKQSG…TVAKKPAVKK (77 aa)). Over residues 8-77 (QSGKKTASRA…TVAKKPAVKK (70 aa)) the composition is skewed to basic residues.

Belongs to the histone H1/H5 family. HCT subfamily.

Functionally, might have a role in establishing the nucleoid structure of elementary bodies. The polypeptide is Histone H1-like protein HC2 (hctB) (Chlamydia pneumoniae (Chlamydophila pneumoniae)).